The following is a 170-amino-acid chain: Adenine phosphoribosyltransferase (170 aa).

It belongs to the purine/pyrimidine phosphoribosyltransferase family. Homodimer.

It is found in the cytoplasm. It catalyses the reaction AMP + diphosphate = 5-phospho-alpha-D-ribose 1-diphosphate + adenine. Its pathway is purine metabolism; AMP biosynthesis via salvage pathway; AMP from adenine: step 1/1. Functionally, catalyzes a salvage reaction resulting in the formation of AMP, that is energically less costly than de novo synthesis. The polypeptide is Adenine phosphoribosyltransferase (Enterococcus faecalis (strain ATCC 700802 / V583)).